The following is a 276-amino-acid chain: 2,3,4,5-tetrahydropyridine-2,6-dicarboxylate N-succinyltransferase (276 aa).

Substrate contacts are provided by R100 and D137.

The protein belongs to the transferase hexapeptide repeat family. In terms of assembly, homotrimer.

It localises to the cytoplasm. The enzyme catalyses (S)-2,3,4,5-tetrahydrodipicolinate + succinyl-CoA + H2O = (S)-2-succinylamino-6-oxoheptanedioate + CoA. It functions in the pathway amino-acid biosynthesis; L-lysine biosynthesis via DAP pathway; LL-2,6-diaminopimelate from (S)-tetrahydrodipicolinate (succinylase route): step 1/3. The sequence is that of 2,3,4,5-tetrahydropyridine-2,6-dicarboxylate N-succinyltransferase from Zymomonas mobilis subsp. mobilis (strain ATCC 31821 / ZM4 / CP4).